A 574-amino-acid polypeptide reads, in one-letter code: FAD-linked oxidoreductase penH (574 aa).

A signal peptide spans 1–25 (MLPRALTLSALLALLLAIYLALAPA). 5 N-linked (GlcNAc...) asparagine glycosylation sites follow: N48, N107, N193, N368, and N385. In terms of domain architecture, FAD-binding PCMH-type spans 121–305 (HQGRIPLYAA…VRVTMRTYPD (185 aa)).

This sequence belongs to the oxygen-dependent FAD-linked oxidoreductase family. Requires FAD as cofactor.

The enzyme catalyses peniprequinolone + A = yaequinolone E + AH2. It functions in the pathway secondary metabolite biosynthesis. It participates in alkaloid biosynthesis. Its pathway is mycotoxin biosynthesis. FAD-linked oxidoreductase; part of the gene cluster that mediates the biosynthesis of penigequinolones, potent insecticidal alkaloids that contain a highly modified 10-carbon prenyl group. The first stage is catalyzed by the nonribosomal peptide synthetase penN that condenses anthranilic acid and O-methyl-L-tyrosine to produce 4'-methoxycyclopeptin. 4'-methoxycyclopeptin is then converted to 4'-methoxydehydrocyclopeptin by the ketoglutarate-dependent dioxygenase penM through dehydrogenation to form a double bond between C-alpha and C-beta of the O-methyltyrosine side chain. PenM also converts its first product methoxydehydrocyclopeptin to 4'-methoxycyclopenin. The following conversion of 4'methoxycyclopenin into 4'-methoxyviridicatin is catalyzed by the cyclopenase penL. 4'-methoxyviridicatin is the precursor of quinolone natural products, and is further converted to quinolinone B. The prenyltransferase penI then catalyzes the canonical Friedel-Crafts alkylation of quinolinone B with dimethylallyl cation to yield dimethylallyl quinolone, which is subjected to FAD-dependent dehydrogenation by the FAD-linked oxidoreductase penH to yield conjugated aryl diene. The delta(3') double bond then serves as the site of the second alkylation with DMAPP catalyzed by the prenyltransferase penG to yield a carbenium ion intermediate, which can be attacked by H(2)O to yield a styrenyl quinolone containing a C3'-hydroxyprenyl chain, or undergo cyclization to yield yaequinolones J1 and J2. The conversion of the styrenyl quinolone into the tetrahydrofuran-containing yaequinolone C is performed by the FAD-dependent monooxygenase penE and involves epoxidation of the terminal C7'-C8' olefin, followed by epoxide ring opening initiated by the C3' hydroxyl group. The predicted cysteine hydrolase penJ acts as an epoxide hydrolase that enhances the rate of the 5-exo-tet cyclization step, increasing the yield of yaequinolone C. PenF catalyzes the cationic rearrangement of the epoxide formed by penE (before ring opening to produce yaequinolone C) into yaequinolone D. Finally, the short-chain dehydrogenase/reductase (SDR)-like reductase penD, catalyzes both the dehydration of yaequinolone D and the reduction of the resulting oxonium to yield penigequinolone. In Penicillium thymicola, this protein is FAD-linked oxidoreductase penH.